Reading from the N-terminus, the 224-residue chain is Holliday junction branch migration complex subunit RuvA (224 aa).

Residues 1–64 (MIGKVAGILD…EDLLQLFGFP (64 aa)) are domain I. A domain II region spans residues 65–143 (TMIEKEWHRL…ALMAMGGGTA (79 aa)). The disordered stretch occupies residues 141–185 (GTAALAPSEPPEPEPGTSSGSRRKTRAPEPPRPSHTADALSALAN). A flexible linker region spans residues 144-170 (ALAPSEPPEPEPGTSSGSRRKTRAPEP). Positions 171-224 (PRPSHTADALSALANLGYQPTDAAQAVAQAAGESPDADTAALIRAALKLLAPKS) are domain III.

This sequence belongs to the RuvA family. In terms of assembly, homotetramer. Forms an RuvA(8)-RuvB(12)-Holliday junction (HJ) complex. HJ DNA is sandwiched between 2 RuvA tetramers; dsDNA enters through RuvA and exits via RuvB. An RuvB hexamer assembles on each DNA strand where it exits the tetramer. Each RuvB hexamer is contacted by two RuvA subunits (via domain III) on 2 adjacent RuvB subunits; this complex drives branch migration. In the full resolvosome a probable DNA-RuvA(4)-RuvB(12)-RuvC(2) complex forms which resolves the HJ.

Its subcellular location is the cytoplasm. In terms of biological role, the RuvA-RuvB-RuvC complex processes Holliday junction (HJ) DNA during genetic recombination and DNA repair, while the RuvA-RuvB complex plays an important role in the rescue of blocked DNA replication forks via replication fork reversal (RFR). RuvA specifically binds to HJ cruciform DNA, conferring on it an open structure. The RuvB hexamer acts as an ATP-dependent pump, pulling dsDNA into and through the RuvAB complex. HJ branch migration allows RuvC to scan DNA until it finds its consensus sequence, where it cleaves and resolves the cruciform DNA. This Cereibacter sphaeroides (strain ATCC 17029 / ATH 2.4.9) (Rhodobacter sphaeroides) protein is Holliday junction branch migration complex subunit RuvA.